The primary structure comprises 749 residues: Probable galactinol--sucrose galactosyltransferase 6 (749 aa).

It belongs to the glycosyl hydrolases 36 family.

It catalyses the reaction alpha-D-galactosyl-(1-&gt;3)-1D-myo-inositol + sucrose = raffinose + myo-inositol. In terms of biological role, transglycosidase operating by a ping-pong reaction mechanism. Involved in the synthesis of raffinose, a major soluble carbohydrate in seeds, roots and tubers. The polypeptide is Probable galactinol--sucrose galactosyltransferase 6 (RFS6) (Arabidopsis thaliana (Mouse-ear cress)).